Here is a 130-residue protein sequence, read N- to C-terminus: Small ribosomal subunit protein uS9 (130 aa).

Belongs to the universal ribosomal protein uS9 family.

This Clostridium perfringens (strain ATCC 13124 / DSM 756 / JCM 1290 / NCIMB 6125 / NCTC 8237 / Type A) protein is Small ribosomal subunit protein uS9.